A 419-amino-acid chain; its full sequence is Subtilisin-like protease 2 (419 aa).

Residues 1-16 (MQLLNFGLLLLPFVAG) form the signal peptide. Positions 17–122 (DLAPQPEPLL…VHPDQHVYLA (106 aa)) are excised as a propeptide. Positions 36 to 122 (QYIVTLKEGL…VHPDQHVYLA (87 aa)) constitute an Inhibitor I9 domain. A Peptidase S8 domain is found at 131–419 (RWGLGYMSSK…IQERKFKLPK (289 aa)). Active-site charge relay system residues include Asp-169 and His-201. Asn-248, Asn-261, and Asn-348 each carry an N-linked (GlcNAc...) asparagine glycan. The active-site Charge relay system is Ser-357. The N-linked (GlcNAc...) asparagine glycan is linked to Asn-388.

The protein belongs to the peptidase S8 family.

The protein resides in the secreted. In terms of biological role, secreted subtilisin-like serine protease with keratinolytic activity that contributes to pathogenicity. The sequence is that of Subtilisin-like protease 2 (SUB2) from Arthroderma benhamiae (Trichophyton mentagrophytes).